Consider the following 655-residue polypeptide: Methylenetetrahydrofolate reductase (NADPH) (655 aa).

The segment at 1–39 is disordered; it reads MVNEPRGNGSPGPRWEGSSSGSESSRTSSRCSTPGLDPE. Residues Ser10, Ser18, Ser19, Ser20, Ser22, Ser24, Ser25, Ser28, and Ser29 each carry the phosphoserine modification. Residues 11 to 35 show a composition bias toward low complexity; the sequence is PGPRWEGSSSGSESSRTSSRCSTPG. Thr33 is subject to Phosphothreonine. Catalysis depends on Glu62, which acts as the Proton donor/acceptor. NAD(+)-binding positions include 62 to 67 and 93 to 94; these read EFFPPR and TW. A Phosphothreonine modification is found at Thr93. 93–94 is a binding site for FAD; the sequence is TW. Ser102 carries the phosphoserine modification. FAD contacts are provided by residues His126, 156 to 158, 173 to 174, Tyr196, 200 to 203, Asp209, and Lys216; these read RGD, YA, and HPEG. Asp158 is a substrate binding site. Substrate contacts are provided by Gln227, Tyr320, and Arg324. Residue Ser393 is modified to Phosphoserine. Thr450 is modified (phosphothreonine). S-adenosyl-L-methionine-binding positions include Asn455, 460 to 463, 480 to 484, Thr559, and Thr572; these read AAET and TINSQ.

Belongs to the methylenetetrahydrofolate reductase family. In terms of assembly, homodimer. Requires FAD as cofactor. Phosphorylation of an N-terminal serine-rich phosphorylation region increases sensitivity to S-adenosylmethionine and inhibition.

The enzyme catalyses (6S)-5-methyl-5,6,7,8-tetrahydrofolate + NADP(+) = (6R)-5,10-methylene-5,6,7,8-tetrahydrofolate + NADPH + H(+). It participates in one-carbon metabolism; tetrahydrofolate interconversion. Its activity is regulated as follows. Allosterically regulated by S-adenosylmethionine (SAM). Its function is as follows. Catalyzes the conversion of 5,10-methylenetetrahydrofolate to 5-methyltetrahydrofolate, a cosubstrate for homocysteine remethylation to methionine. Represents a key regulatory connection between the folate and methionine cycles. This Bos taurus (Bovine) protein is Methylenetetrahydrofolate reductase (NADPH) (MTHFR).